Consider the following 625-residue polypeptide: Thrombopoietin receptor (625 aa).

The signal sequence occupies residues 1–25 (MPSWALFMVTSCLLLALPNQAQVTS). At 26 to 482 (QDVFLLALGT…RVSTGSETAW (457 aa)) the chain is on the extracellular side. N-linked (GlcNAc...) asparagine glycosylation is present at Asn-117. Fibronectin type-III domains are found at residues 178–270 (NATA…PVTV) and 383–479 (PTPS…TGSE). The short motif at 465 to 469 (WSAWS) is the WSXWS motif element. Residues 483 to 504 (ITLVTALLLVLSLSALLGLLLL) form a helical membrane-spanning segment. Topologically, residues 505–625 (KWQFPAHYRR…YLPLSYWQQP (121 aa)) are cytoplasmic. The Box 1 motif motif lies at 519–527 (LWPSLPDLH). Residues Lys-544 and Lys-564 each participate in a glycyl lysine isopeptide (Lys-Gly) (interchain with G-Cter in ubiquitin) cross-link. Tyr-616 and Tyr-621 each carry phosphotyrosine.

This sequence belongs to the type I cytokine receptor family. Type 1 subfamily. As to quaternary structure, homodimer. Interacts with ATXN2L. Interacts with JAK2 and TYK2; these interactions increase MPL localization to the cell membrane. Interacts with THPO. Interacts with SHIP/INPP5D. Interacts with kinases BTK and SYK. In terms of processing, ubiquitination at Lys-544 and Lys-564 targets MPL for degradation by both the lysosomal and proteasomal pathways. The E3 ubiquitin-protein ligase CBL significantly contributes to this ubiquitination.

Its subcellular location is the cell membrane. It is found in the golgi apparatus. It localises to the cell surface. Functionally, receptor for thrombopoietin that regulates hematopoietic stem cell renewal, megakaryocyte differentiation, and platelet formation. Upon activation by THPO, induces rapid tyrosine phosphorylation and activation of JAK2, providing docking sites for many signaling proteins such as STAT5, SHIP/INPP5D, GRB2, SOS1 and PI3K. In turn, These signaling cascades lead to the proliferation, survival, and differentiation of megakaryocytes, ultimately leading to increased platelet production. In terms of biological role, acts as an inhibitor of thrombopoietin signaling by promoting protein down-regulation of full-length isoform Mpl-fl. The protein is Thrombopoietin receptor (Mpl) of Mus musculus (Mouse).